Reading from the N-terminus, the 71-residue chain is Small ribosomal subunit protein bS18 (71 aa).

The protein belongs to the bacterial ribosomal protein bS18 family. In terms of assembly, part of the 30S ribosomal subunit. Forms a tight heterodimer with protein bS6.

Its function is as follows. Binds as a heterodimer with protein bS6 to the central domain of the 16S rRNA, where it helps stabilize the platform of the 30S subunit. The polypeptide is Small ribosomal subunit protein bS18 (Thermosynechococcus vestitus (strain NIES-2133 / IAM M-273 / BP-1)).